We begin with the raw amino-acid sequence, 177 residues long: ATP synthase subunit delta (177 aa).

It belongs to the ATPase delta chain family. As to quaternary structure, F-type ATPases have 2 components, F(1) - the catalytic core - and F(0) - the membrane proton channel. F(1) has five subunits: alpha(3), beta(3), gamma(1), delta(1), epsilon(1). F(0) has three main subunits: a(1), b(2) and c(10-14). The alpha and beta chains form an alternating ring which encloses part of the gamma chain. F(1) is attached to F(0) by a central stalk formed by the gamma and epsilon chains, while a peripheral stalk is formed by the delta and b chains.

It localises to the cell inner membrane. Its function is as follows. F(1)F(0) ATP synthase produces ATP from ADP in the presence of a proton or sodium gradient. F-type ATPases consist of two structural domains, F(1) containing the extramembraneous catalytic core and F(0) containing the membrane proton channel, linked together by a central stalk and a peripheral stalk. During catalysis, ATP synthesis in the catalytic domain of F(1) is coupled via a rotary mechanism of the central stalk subunits to proton translocation. In terms of biological role, this protein is part of the stalk that links CF(0) to CF(1). It either transmits conformational changes from CF(0) to CF(1) or is implicated in proton conduction. The sequence is that of ATP synthase subunit delta from Leptothrix cholodnii (strain ATCC 51168 / LMG 8142 / SP-6) (Leptothrix discophora (strain SP-6)).